A 256-amino-acid polypeptide reads, in one-letter code: MLKKQDAIVLKSIDYGETNKIVTLFTKEDGKLAVLAKGAKKPNSRFAAVTQPFVYGSYLYFQGNGLPSLSQGEAVDSFKELQFDIVKSAYAAYITELVDKLTEERKPTFFLFDWLLLALRQINTGQDAEIIARIMDMKMLPLAGAKPELDCCACCRSETRDPVAFSVAYAGFLCSNCIHKDERAFPITLPFAKLFRVLYYVDLTKVGTISVKAETKRRLEWMIRTYYDEYVGVQLKARRFISQLDKMGGLSSDVDK.

Belongs to the RecO family.

Involved in DNA repair and RecF pathway recombination. The sequence is that of DNA repair protein RecO from Shouchella clausii (strain KSM-K16) (Alkalihalobacillus clausii).